We begin with the raw amino-acid sequence, 261 residues long: Transmembrane protein 106A (261 aa).

The span at 1-10 (MGKAFSQLTS) shows a compositional bias: polar residues. The tract at residues 1–22 (MGKAFSQLTSQKDEDKSILPDN) is disordered. A helical membrane pass occupies residues 93–113 (LSVFLAVTICLLIFSLTIFFL).

This sequence belongs to the TMEM106 family.

The protein resides in the cell membrane. Functionally, activates macrophages and polarizes them into M1-like macrophages through the activation of the MAPK and NF-kappaB signaling pathway. Upon activation, up-regulates the expression of CD80, CD86, CD69 and MHC II on macrophages, and induces the release of pro-inflammatory cytokines such as TNF, IL1B, IL6, CCL2 and nitric oxide. May play a role in inhibition of proliferation and migration. This Rattus norvegicus (Rat) protein is Transmembrane protein 106A (Tmem106a).